The sequence spans 205 residues: uncharacterized protein (205 aa).

This is an uncharacterized protein from Bacillus subtilis (strain 168).